Consider the following 414-residue polypeptide: Hydroxysqualene dehydroxylase (414 aa).

Belongs to the HpnE family.

It catalyses the reaction squalene + FAD + H2O + H(+) = hydroxysqualene + FADH2. The protein operates within secondary metabolite biosynthesis; hopanoid biosynthesis. In terms of biological role, involved in the biosynthesis of the hopanoid precursor squalene (SQ) from farnesyl diphosphate (FPP). Catalyzes the third (last) step, the reduction of hydroxysqualene (HSQ) to SQ. In Zymomonas mobilis subsp. mobilis (strain ATCC 31821 / ZM4 / CP4), this protein is Hydroxysqualene dehydroxylase.